The following is a 473-amino-acid chain: Ion-translocating oxidoreductase complex subunit C (473 aa).

4Fe-4S ferredoxin-type domains lie at 328-357 and 368-396; these read KNESISEKTCIRCGYCSYVCPVNLLPQQLY and TKKHYVLDCIECKACEKVCPSYIPLVKYF. Residues Cys337, Cys340, Cys343, Cys347, Cys376, Cys379, Cys382, and Cys386 each contribute to the [4Fe-4S] cluster site.

This sequence belongs to the 4Fe4S bacterial-type ferredoxin family. RnfC subfamily. The complex is composed of six subunits: RnfA, RnfB, RnfC, RnfD, RnfE and RnfG. The cofactor is [4Fe-4S] cluster.

It is found in the cell inner membrane. Part of a membrane-bound complex that couples electron transfer with translocation of ions across the membrane. This chain is Ion-translocating oxidoreductase complex subunit C, found in Buchnera aphidicola subsp. Acyrthosiphon pisum (strain APS) (Acyrthosiphon pisum symbiotic bacterium).